Consider the following 214-residue polypeptide: Cytochrome b (214 aa).

The next 4 helical transmembrane spans lie at 31 to 51 (FGSMLLACLMIQTITGFFLAI), 75 to 96 (WIMQNTXAIGASMFFICIYIHI), 111 to 131 (WLSGTTLLITLMATAFFGYVL), and 176 to 196 (FFALHFILPFIIISLSSAHIL). Positions 81 and 95 each coordinate heme b. Positions 180 and 194 each coordinate heme b. Residue His199 participates in a ubiquinone binding.

Belongs to the cytochrome b family. In terms of assembly, the cytochrome bc1 complex contains 3 respiratory subunits (MT-CYB, CYC1 and UQCRFS1), 2 core proteins (UQCRC1 and UQCRC2) and probably 6 low-molecular weight proteins. Requires heme b as cofactor.

It localises to the mitochondrion inner membrane. In terms of biological role, component of the ubiquinol-cytochrome c reductase complex (complex III or cytochrome b-c1 complex) that is part of the mitochondrial respiratory chain. The b-c1 complex mediates electron transfer from ubiquinol to cytochrome c. Contributes to the generation of a proton gradient across the mitochondrial membrane that is then used for ATP synthesis. This chain is Cytochrome b (MT-CYB), found in Bothriechis schlegelii (Eyelash palm pitviper).